The sequence spans 470 residues: Methylenetetrahydrofolate--tRNA-(uracil-5-)-methyltransferase TrmFO (470 aa).

10-15 (GAGLAG) is an FAD binding site.

The protein belongs to the MnmG family. TrmFO subfamily. Requires FAD as cofactor.

The protein localises to the cytoplasm. It catalyses the reaction uridine(54) in tRNA + (6R)-5,10-methylene-5,6,7,8-tetrahydrofolate + NADH + H(+) = 5-methyluridine(54) in tRNA + (6S)-5,6,7,8-tetrahydrofolate + NAD(+). The catalysed reaction is uridine(54) in tRNA + (6R)-5,10-methylene-5,6,7,8-tetrahydrofolate + NADPH + H(+) = 5-methyluridine(54) in tRNA + (6S)-5,6,7,8-tetrahydrofolate + NADP(+). Catalyzes the folate-dependent formation of 5-methyl-uridine at position 54 (M-5-U54) in all tRNAs. The protein is Methylenetetrahydrofolate--tRNA-(uracil-5-)-methyltransferase TrmFO of Prochlorococcus marinus subsp. pastoris (strain CCMP1986 / NIES-2087 / MED4).